We begin with the raw amino-acid sequence, 509 residues long: Maturase K (509 aa).

Belongs to the intron maturase 2 family. MatK subfamily.

It localises to the plastid. Its subcellular location is the chloroplast. Its function is as follows. Usually encoded in the trnK tRNA gene intron. Probably assists in splicing its own and other chloroplast group II introns. The sequence is that of Maturase K from Metasequoia glyptostroboides (Dawn redwood).